The sequence spans 792 residues: Phenylalanine--tRNA ligase beta subunit (792 aa).

A tRNA-binding domain is found at 40–156; sequence FPRTENLIVG…AKLNDIDPLK (117 aa). The region spanning 404–472 is the B5 domain; sequence LKDNLIDFDS…KKINVNNLEL (69 aa). Mg(2+)-binding residues include D450, D456, E459, and E460.

The protein belongs to the phenylalanyl-tRNA synthetase beta subunit family. Type 1 subfamily. In terms of assembly, tetramer of two alpha and two beta subunits. The cofactor is Mg(2+).

The protein localises to the cytoplasm. The catalysed reaction is tRNA(Phe) + L-phenylalanine + ATP = L-phenylalanyl-tRNA(Phe) + AMP + diphosphate + H(+). The chain is Phenylalanine--tRNA ligase beta subunit from Malacoplasma penetrans (strain HF-2) (Mycoplasma penetrans).